A 207-amino-acid polypeptide reads, in one-letter code: Large ribosomal subunit protein uL4 (207 aa).

Residues 48–85 (THKVKNRSEVRGGGRKPWRQKGTGRARQGSIRSPQWRG) are disordered. Residues 60-71 (GGRKPWRQKGTG) are compositionally biased toward basic residues.

Belongs to the universal ribosomal protein uL4 family. Part of the 50S ribosomal subunit.

One of the primary rRNA binding proteins, this protein initially binds near the 5'-end of the 23S rRNA. It is important during the early stages of 50S assembly. It makes multiple contacts with different domains of the 23S rRNA in the assembled 50S subunit and ribosome. In terms of biological role, forms part of the polypeptide exit tunnel. The sequence is that of Large ribosomal subunit protein uL4 from Bacillus subtilis (strain 168).